The primary structure comprises 38 residues: Potassium channel toxin alpha-KTx 3.12 (38 aa).

Cystine bridges form between Cys8–Cys28, Cys14–Cys33, and Cys18–Cys35. Lys38 carries the post-translational modification Lysine amide.

The protein belongs to the short scorpion toxin superfamily. Potassium channel inhibitor family. Alpha-KTx 03 subfamily. As to expression, expressed by the venom gland.

It is found in the secreted. Functionally, potent inhibitor of voltage-dependent potassium channels, with a preference for Kv1.3/KCNA3 versus Kv1.2/KCNA2. This is Potassium channel toxin alpha-KTx 3.12 from Androctonus amoreuxi (African fattail scorpion).